The primary structure comprises 1388 residues: DNA-directed RNA polymerase subunit beta' (1388 aa).

Zn(2+) contacts are provided by Cys70, Cys72, Cys85, and Cys88. Residues Asp461, Asp463, and Asp465 each contribute to the Mg(2+) site. Positions 808, 882, 889, and 892 each coordinate Zn(2+).

Belongs to the RNA polymerase beta' chain family. In terms of assembly, the RNAP catalytic core consists of 2 alpha, 1 beta, 1 beta' and 1 omega subunit. When a sigma factor is associated with the core the holoenzyme is formed, which can initiate transcription. Requires Mg(2+) as cofactor. Zn(2+) is required as a cofactor.

The enzyme catalyses RNA(n) + a ribonucleoside 5'-triphosphate = RNA(n+1) + diphosphate. Its function is as follows. DNA-dependent RNA polymerase catalyzes the transcription of DNA into RNA using the four ribonucleoside triphosphates as substrates. The sequence is that of DNA-directed RNA polymerase subunit beta' from Acidiphilium cryptum (strain JF-5).